Reading from the N-terminus, the 88-residue chain is UPF0367 protein Tery_1229 (88 aa).

It belongs to the UPF0367 family.

This chain is UPF0367 protein Tery_1229, found in Trichodesmium erythraeum (strain IMS101).